The following is a 599-amino-acid chain: Elongation factor 4 (599 aa).

Positions 5–187 (AHIRNFSIVA…AIVKHLPAPK (183 aa)) constitute a tr-type G domain. GTP-binding positions include 17–22 (DHGKST) and 134–137 (NKID).

This sequence belongs to the TRAFAC class translation factor GTPase superfamily. Classic translation factor GTPase family. LepA subfamily.

The protein resides in the cell inner membrane. The enzyme catalyses GTP + H2O = GDP + phosphate + H(+). Required for accurate and efficient protein synthesis under certain stress conditions. May act as a fidelity factor of the translation reaction, by catalyzing a one-codon backward translocation of tRNAs on improperly translocated ribosomes. Back-translocation proceeds from a post-translocation (POST) complex to a pre-translocation (PRE) complex, thus giving elongation factor G a second chance to translocate the tRNAs correctly. Binds to ribosomes in a GTP-dependent manner. In Ruegeria pomeroyi (strain ATCC 700808 / DSM 15171 / DSS-3) (Silicibacter pomeroyi), this protein is Elongation factor 4.